The following is a 288-amino-acid chain: Large ribosomal subunit protein uL2 (288 aa).

A compositionally biased stretch (basic and acidic residues) spans 29-43 (PEKSLTRGFKRDKGR). Disordered regions lie at residues 29–59 (PEKS…GGHK) and 210–288 (GRNR…GRQS). Basic residues-rich tracts occupy residues 210 to 221 (GRNRWKGRRPKV) and 272 to 288 (VRRR…GRQS).

The protein belongs to the universal ribosomal protein uL2 family. In terms of assembly, part of the 50S ribosomal subunit. Forms a bridge to the 30S subunit in the 70S ribosome.

One of the primary rRNA binding proteins. Required for association of the 30S and 50S subunits to form the 70S ribosome, for tRNA binding and peptide bond formation. It has been suggested to have peptidyltransferase activity; this is somewhat controversial. Makes several contacts with the 16S rRNA in the 70S ribosome. The chain is Large ribosomal subunit protein uL2 from Thermosynechococcus vestitus (strain NIES-2133 / IAM M-273 / BP-1).